The chain runs to 545 residues: Chaperonin GroEL 4 (545 aa).

ATP is bound by residues 30–33, lysine 51, 87–91, glycine 415, and aspartate 495; these read TLGP and DGTTT.

The protein belongs to the chaperonin (HSP60) family. As to quaternary structure, forms a cylinder of 14 subunits composed of two heptameric rings stacked back-to-back. Interacts with the co-chaperonin GroES.

Its subcellular location is the cytoplasm. The catalysed reaction is ATP + H2O + a folded polypeptide = ADP + phosphate + an unfolded polypeptide.. Together with its co-chaperonin GroES, plays an essential role in assisting protein folding. The GroEL-GroES system forms a nano-cage that allows encapsulation of the non-native substrate proteins and provides a physical environment optimized to promote and accelerate protein folding. In Rhizobium meliloti (strain 1021) (Ensifer meliloti), this protein is Chaperonin GroEL 4.